The following is a 111-amino-acid chain: Large ribosomal subunit protein uL22 (111 aa).

The protein belongs to the universal ribosomal protein uL22 family. Part of the 50S ribosomal subunit.

Its function is as follows. This protein binds specifically to 23S rRNA; its binding is stimulated by other ribosomal proteins, e.g. L4, L17, and L20. It is important during the early stages of 50S assembly. It makes multiple contacts with different domains of the 23S rRNA in the assembled 50S subunit and ribosome. In terms of biological role, the globular domain of the protein is located near the polypeptide exit tunnel on the outside of the subunit, while an extended beta-hairpin is found that lines the wall of the exit tunnel in the center of the 70S ribosome. The protein is Large ribosomal subunit protein uL22 of Chlamydia trachomatis serovar A (strain ATCC VR-571B / DSM 19440 / HAR-13).